A 146-amino-acid chain; its full sequence is Hemoglobin subunit beta (146 aa).

Residues 2 to 146 form the Globin domain; it reads PFSAHEEKLI…VAAALSAEYH (145 aa). 2 residues coordinate heme b: His-63 and His-92.

It belongs to the globin family. Heterotetramer of two alpha chains and two beta chains. As to expression, red blood cells.

Its function is as follows. Involved in oxygen transport from the lung to the various peripheral tissues. In Caiman crocodilus (Spectacled caiman), this protein is Hemoglobin subunit beta (HBB).